The sequence spans 183 residues: Large ribosomal subunit protein uL5 (183 aa).

It belongs to the universal ribosomal protein uL5 family. As to quaternary structure, part of the 50S ribosomal subunit; part of the 5S rRNA/L5/L18/L25 subcomplex. Contacts the 5S rRNA and the P site tRNA. Forms a bridge to the 30S subunit in the 70S ribosome.

This is one of the proteins that bind and probably mediate the attachment of the 5S RNA into the large ribosomal subunit, where it forms part of the central protuberance. In the 70S ribosome it contacts protein S13 of the 30S subunit (bridge B1b), connecting the 2 subunits; this bridge is implicated in subunit movement. Contacts the P site tRNA; the 5S rRNA and some of its associated proteins might help stabilize positioning of ribosome-bound tRNAs. The protein is Large ribosomal subunit protein uL5 of Tropheryma whipplei (strain TW08/27) (Whipple's bacillus).